The following is a 229-amino-acid chain: Nisin biosynthesis regulatory protein NisR (229 aa).

Residues 4-117 (KILIVDDDQE…QLVAKVEANI (114 aa)) form the Response regulatory domain. The residue at position 53 (Asp-53) is a 4-aspartylphosphate. The ompR/PhoB-type DNA-binding region spans 132 to 229 (EIRRDLGPIT…VRGLGYQWHG (98 aa)).

In terms of processing, phosphorylated by NisK.

Its function is as follows. Member of the two-component regulatory system NisK/NisR involved in the regulation of the biosynthesis of lantibiotic nisin. NisR may function as a regulatory protein. In Lactococcus lactis subsp. lactis (Streptococcus lactis), this protein is Nisin biosynthesis regulatory protein NisR (nisR).